A 100-amino-acid chain; its full sequence is MKITQEEVTHVANLSKLRFSEEETAAFATTLSKIVDMVELLGEVDTTGVAPTTTMADRKTVLRPDVAEEGIDRDRLFKNVPEKDNYYIKVPAILDNGGDA.

It belongs to the GatC family. In terms of assembly, heterotrimer of A, B and C subunits.

The catalysed reaction is L-glutamyl-tRNA(Gln) + L-glutamine + ATP + H2O = L-glutaminyl-tRNA(Gln) + L-glutamate + ADP + phosphate + H(+). It carries out the reaction L-aspartyl-tRNA(Asn) + L-glutamine + ATP + H2O = L-asparaginyl-tRNA(Asn) + L-glutamate + ADP + phosphate + 2 H(+). In terms of biological role, allows the formation of correctly charged Asn-tRNA(Asn) or Gln-tRNA(Gln) through the transamidation of misacylated Asp-tRNA(Asn) or Glu-tRNA(Gln) in organisms which lack either or both of asparaginyl-tRNA or glutaminyl-tRNA synthetases. The reaction takes place in the presence of glutamine and ATP through an activated phospho-Asp-tRNA(Asn) or phospho-Glu-tRNA(Gln). The chain is Aspartyl/glutamyl-tRNA(Asn/Gln) amidotransferase subunit C from Streptococcus pneumoniae (strain Taiwan19F-14).